Consider the following 103-residue polypeptide: Histone H4 (103 aa).

Residues 1–14 (MSGRGKGGKGLGKG) show a composition bias toward gly residues. Residues 1-20 (MSGRGKGGKGLGKGGAKRHR) are disordered. N-acetylserine is present on Ser-2. Position 17 is an N6-acetyllysine (Lys-17). A DNA-binding region spans residues 17–21 (KRHRK). Lys-21 is subject to N6-methyllysine.

The protein belongs to the histone H4 family. As to quaternary structure, the nucleosome is a histone octamer containing two molecules each of H2A, H2B, H3 and H4 assembled in one H3-H4 heterotetramer and two H2A-H2B heterodimers. The octamer wraps approximately 147 bp of DNA.

Its subcellular location is the nucleus. The protein localises to the chromosome. In terms of biological role, core component of nucleosome. Nucleosomes wrap and compact DNA into chromatin, limiting DNA accessibility to the cellular machineries which require DNA as a template. Histones thereby play a central role in transcription regulation, DNA repair, DNA replication and chromosomal stability. DNA accessibility is regulated via a complex set of post-translational modifications of histones, also called histone code, and nucleosome remodeling. The chain is Histone H4 from Pyrenomonas salina.